Here is a 196-residue protein sequence, read N- to C-terminus: ATP-dependent Clp protease proteolytic subunit (196 aa).

Ser101 functions as the Nucleophile in the catalytic mechanism. His126 is an active-site residue.

It belongs to the peptidase S14 family. As to quaternary structure, component of the chloroplastic Clp protease core complex.

The protein resides in the plastid. It is found in the chloroplast stroma. It catalyses the reaction Hydrolysis of proteins to small peptides in the presence of ATP and magnesium. alpha-casein is the usual test substrate. In the absence of ATP, only oligopeptides shorter than five residues are hydrolyzed (such as succinyl-Leu-Tyr-|-NHMec, and Leu-Tyr-Leu-|-Tyr-Trp, in which cleavage of the -Tyr-|-Leu- and -Tyr-|-Trp bonds also occurs).. Its function is as follows. Cleaves peptides in various proteins in a process that requires ATP hydrolysis. Has a chymotrypsin-like activity. Plays a major role in the degradation of misfolded proteins. In Atropa belladonna (Belladonna), this protein is ATP-dependent Clp protease proteolytic subunit.